Reading from the N-terminus, the 159-residue chain is Ribosomal RNA large subunit methyltransferase H (159 aa).

S-adenosyl-L-methionine contacts are provided by residues leucine 76, glycine 108, and 127–132 (FSKMTF).

It belongs to the RNA methyltransferase RlmH family. In terms of assembly, homodimer.

The protein resides in the cytoplasm. The enzyme catalyses pseudouridine(1915) in 23S rRNA + S-adenosyl-L-methionine = N(3)-methylpseudouridine(1915) in 23S rRNA + S-adenosyl-L-homocysteine + H(+). Functionally, specifically methylates the pseudouridine at position 1915 (m3Psi1915) in 23S rRNA. The chain is Ribosomal RNA large subunit methyltransferase H from Bifidobacterium animalis subsp. lactis (strain AD011).